The sequence spans 140 residues: MGMTVIAFDFGTKSIGCAVGQSITGTAQSLPAFKAQDGIPDWADIEKCLKEWKPDMVVVGLPLNMDGTEQDLTRRARKFGHRLNGRFGVKVAWQDERLTTTQARTEIFERGGYRALKKGKVDSISACLILESWFEEHPEG.

The protein belongs to the YqgF nuclease family.

It localises to the cytoplasm. In terms of biological role, could be a nuclease involved in processing of the 5'-end of pre-16S rRNA. The chain is Putative pre-16S rRNA nuclease from Actinobacillus succinogenes (strain ATCC 55618 / DSM 22257 / CCUG 43843 / 130Z).